The following is a 621-amino-acid chain: Glutathione-regulated potassium-efflux system protein KefC (621 aa).

12 consecutive transmembrane segments (helical) span residues 9 to 29, 30 to 50, 54 to 74, 90 to 110, 114 to 134, 149 to 169, 178 to 198, 232 to 252, 270 to 290, 296 to 316, 326 to 346, and 359 to 379; these read ALIY…LGLG, SVLG…RLVN, AILH…GLEL, GALQ…LLGL, VAEL…MQAM, FAVL…IPLL, LMAF…VVVL, LLLE…GVLL, GLLL…APWS, IVIL…LIAQ, RWFA…FGPA, and ALTL…VLLT. An RCK N-terminal domain is found at 399–518; it reads QPRVIVAGFG…AGVEAPERET (120 aa). Residues 598 to 621 form a disordered region; sequence GWQGTEEGRHTGDIADEPENKPSA.

It belongs to the monovalent cation:proton antiporter 2 (CPA2) transporter (TC 2.A.37) family. KefC subfamily. Homodimer. Interacts with the regulatory subunit KefF.

It localises to the cell inner membrane. Functionally, pore-forming subunit of a potassium efflux system that confers protection against electrophiles. Catalyzes K(+)/H(+) antiport. The sequence is that of Glutathione-regulated potassium-efflux system protein KefC from Klebsiella aerogenes (Enterobacter aerogenes).